The following is a 265-amino-acid chain: Undecaprenyl-diphosphatase (265 aa).

8 consecutive transmembrane segments (helical) span residues Val-7 to Ser-27, Thr-45 to His-65, Leu-86 to Ile-106, Leu-108 to Ile-128, Ile-145 to Phe-165, Ile-186 to Ile-206, Ile-214 to Cys-234, and Thr-245 to Asn-265.

The protein belongs to the UppP family.

Its subcellular location is the cell membrane. The catalysed reaction is di-trans,octa-cis-undecaprenyl diphosphate + H2O = di-trans,octa-cis-undecaprenyl phosphate + phosphate + H(+). Functionally, catalyzes the dephosphorylation of undecaprenyl diphosphate (UPP). Confers resistance to bacitracin. The polypeptide is Undecaprenyl-diphosphatase (Buchnera aphidicola subsp. Acyrthosiphon pisum (strain 5A)).